A 215-amino-acid polypeptide reads, in one-letter code: MQIEIKTLDNGSAGTAELPDEIFAATPRADIMARVVHWQLACRRAGTHKVKGMGEVSGTTKKPYRQKGTGNARQGSLRAPQFRTGGAVHGPVVRDHGYDLPKKVRRLGLISALSQKQAEGKLVVIDTAAGMEKTRDLAAKLRALGWRSALIVDGASVDEGFARASRSLLAVDVLPTIGANVYDILNHDVLAITVAGVEALKARLGFGAAEERSAA.

The interval 51 to 88 is disordered; it reads KGMGEVSGTTKKPYRQKGTGNARQGSLRAPQFRTGGAV.

This sequence belongs to the universal ribosomal protein uL4 family. As to quaternary structure, part of the 50S ribosomal subunit.

One of the primary rRNA binding proteins, this protein initially binds near the 5'-end of the 23S rRNA. It is important during the early stages of 50S assembly. It makes multiple contacts with different domains of the 23S rRNA in the assembled 50S subunit and ribosome. In terms of biological role, forms part of the polypeptide exit tunnel. The chain is Large ribosomal subunit protein uL4 from Granulibacter bethesdensis (strain ATCC BAA-1260 / CGDNIH1).